A 424-amino-acid polypeptide reads, in one-letter code: 2,3-bisphosphoglycerate-independent phosphoglycerate mutase (424 aa).

Belongs to the BPG-independent phosphoglycerate mutase family. A-PGAM subfamily.

It catalyses the reaction (2R)-2-phosphoglycerate = (2R)-3-phosphoglycerate. It functions in the pathway carbohydrate degradation; glycolysis; pyruvate from D-glyceraldehyde 3-phosphate: step 3/5. Catalyzes the interconversion of 2-phosphoglycerate and 3-phosphoglycerate. The protein is 2,3-bisphosphoglycerate-independent phosphoglycerate mutase of Aeropyrum pernix (strain ATCC 700893 / DSM 11879 / JCM 9820 / NBRC 100138 / K1).